Consider the following 874-residue polypeptide: Probable inorganic carbon transporter subunit DabA (874 aa).

The Zn(2+) site is built by Cys398, Asp400, His580, and Cys595.

Belongs to the inorganic carbon transporter (TC 9.A.2) DabA family. As to quaternary structure, forms a complex with DabB. Zn(2+) is required as a cofactor.

The protein localises to the cell membrane. Its function is as follows. Part of an energy-coupled inorganic carbon pump. The polypeptide is Probable inorganic carbon transporter subunit DabA (Bacillus anthracis (strain A0248)).